The sequence spans 334 residues: tRNA N6-adenosine threonylcarbamoyltransferase (334 aa).

Positions 110 and 114 each coordinate Fe cation. Residues 133–137 (IVSGG), aspartate 166, glycine 179, aspartate 183, and asparagine 275 contribute to the substrate site. Aspartate 303 serves as a coordination point for Fe cation.

It belongs to the KAE1 / TsaD family. The cofactor is Fe(2+).

The protein localises to the cytoplasm. It carries out the reaction L-threonylcarbamoyladenylate + adenosine(37) in tRNA = N(6)-L-threonylcarbamoyladenosine(37) in tRNA + AMP + H(+). Required for the formation of a threonylcarbamoyl group on adenosine at position 37 (t(6)A37) in tRNAs that read codons beginning with adenine. Is involved in the transfer of the threonylcarbamoyl moiety of threonylcarbamoyl-AMP (TC-AMP) to the N6 group of A37, together with TsaE and TsaB. TsaD likely plays a direct catalytic role in this reaction. The chain is tRNA N6-adenosine threonylcarbamoyltransferase from Salinibacter ruber (strain DSM 13855 / M31).